We begin with the raw amino-acid sequence, 2967 residues long: BEACH domain-containing protein lvsD (2967 aa).

Disordered regions lie at residues 1–25 (MSSP…RIGG), 322–364 (NNNN…SSNS), 588–615 (ILSI…QQQL), 917–936 (NNSN…NNIN), 1077–1105 (GGSN…KDKD), 1173–1220 (NTSS…SDHR), 1583–1613 (NNNS…NNEN), 1831–1859 (QQQQ…SSVV), 1921–2009 (PQKT…TLNN), and 2029–2062 (KSTL…NNKN). Residues 229–491 (MTFRKAPSSV…QDLFRKGSNY (263 aa)) enclose the BEACH 1 domain. Over residues 1079–1092 (SNNNNNNNNNNSNN) the composition is skewed to low complexity. Basic and acidic residues predominate over residues 1093–1105 (NKDKIDSNNKDKD). Low complexity-rich tracts occupy residues 1185-1194 (PLLTSTKSMS), 1583-1611 (NNNS…LNNN), 1831-1857 (QQQQ…SSSS), 1926-1980 (QNQH…SFSN), 1993-2006 (NIIT…TTST), and 2034-2062 (SSSS…NNKN). The region spanning 2060 to 2162 (NKNIKLEFST…ICAQILKLIG (103 aa)) is the BEACH-type PH domain. BEACH domains lie at 2202-2492 (TPQQ…HPQR) and 2628-2785 (NSRV…IYSN). WD repeat units follow at residues 2658-2710 (NHKS…SDHH) and 2720-2761 (GHNF…KSIQ). Disordered regions lie at residues 2798-2820 (SATT…SSNT) and 2915-2934 (PSTS…NNGN). Composition is skewed to low complexity over residues 2811–2820 (SSSSLSSSNT) and 2924–2934 (NSNNNNNNNGN).

The sequence is that of BEACH domain-containing protein lvsD (lvsD) from Dictyostelium discoideum (Social amoeba).